Reading from the N-terminus, the 433-residue chain is Forkhead box protein A2-B (433 aa).

Residues 147 to 241 (KPPYSYISLI…ENGCYLRRQK (95 aa)) constitute a DNA-binding region (fork-head). The segment covering 247–260 (KKPSLREGGGKKLS) has biased composition (basic and acidic residues). 2 disordered regions span residues 247–337 (KKPS…QSHL) and 407–433 (SGLE…MNSS). A compositionally biased stretch (low complexity) spans 261-282 (EGASSVGSVGNSSSERSVGNES). Positions 292–302 (EQKRSLVDMKS) are enriched in basic and acidic residues. Residues 315–331 (ASQAQHLLSQHHSVLSH) are compositionally biased toward low complexity. Over residues 407 to 421 (SGLEPSPISSDTSYY) the composition is skewed to polar residues.

The protein localises to the nucleus. In terms of biological role, acts as a transcriptional activator during early development, limiting the extent of mesoderm formation in the gastrula. Binds to DNA via the target sequence 5'-GT[AC]AACA-3', with 5'-GTAAACA-3' being the preferred binding site. In Xenopus laevis (African clawed frog), this protein is Forkhead box protein A2-B (foxa2-b).